The sequence spans 524 residues: CTP synthase (524 aa).

The tract at residues 1 to 263 (MKKYVIVTGG…HEKIASKLNV (263 aa)) is amidoligase domain. Ser13 serves as a coordination point for CTP. Ser13 lines the UTP pocket. ATP is bound by residues 14-19 (GIGKGI) and Asp71. 2 residues coordinate Mg(2+): Asp71 and Glu137. CTP is bound by residues 144-146 (DIE), 184-189 (KTKPTQ), and Lys220. Residues 184–189 (KTKPTQ) and Lys220 each bind UTP. In terms of domain architecture, Glutamine amidotransferase type-1 spans 282 to 524 (RIALVGKYLG…YLRKVLEGSQ (243 aa)). Gly342 serves as a coordination point for L-glutamine. The active-site Nucleophile; for glutamine hydrolysis is Cys369. L-glutamine contacts are provided by residues 370-373 (LGMQ), Glu393, and Arg451. Catalysis depends on residues His499 and Glu501.

Belongs to the CTP synthase family. In terms of assembly, homotetramer.

It catalyses the reaction UTP + L-glutamine + ATP + H2O = CTP + L-glutamate + ADP + phosphate + 2 H(+). The catalysed reaction is L-glutamine + H2O = L-glutamate + NH4(+). The enzyme catalyses UTP + NH4(+) + ATP = CTP + ADP + phosphate + 2 H(+). It participates in pyrimidine metabolism; CTP biosynthesis via de novo pathway; CTP from UDP: step 2/2. Its activity is regulated as follows. Allosterically activated by GTP, when glutamine is the substrate; GTP has no effect on the reaction when ammonia is the substrate. The allosteric effector GTP functions by stabilizing the protein conformation that binds the tetrahedral intermediate(s) formed during glutamine hydrolysis. Inhibited by the product CTP, via allosteric rather than competitive inhibition. Catalyzes the ATP-dependent amination of UTP to CTP with either L-glutamine or ammonia as the source of nitrogen. Regulates intracellular CTP levels through interactions with the four ribonucleotide triphosphates. The sequence is that of CTP synthase from Thermotoga maritima (strain ATCC 43589 / DSM 3109 / JCM 10099 / NBRC 100826 / MSB8).